Here is a 266-residue protein sequence, read N- to C-terminus: Pre-mRNA-splicing factor PRP11 (266 aa).

The interval 1 to 21 (MNYLEGVGSKKGGGGIASESQ) is disordered. Residues 66-96 (LVCKLCNTMHMSWSSVERHLGGKKHGLNVLR) form a Matrin-type zinc finger.

The protein belongs to the SF3A2 family. As to quaternary structure, belongs to the CWC complex (or CEF1-associated complex), a spliceosome sub-complex reminiscent of a late-stage spliceosome composed of the U2, U5 and U6 snRNAs and at least BUD13, BUD31, BRR2, CDC40, CEF1, CLF1, CUS1, CWC2, CWC15, CWC21, CWC22, CWC23, CWC24, CWC25, CWC27, ECM2, HSH155, IST3, ISY1, LEA1, MSL1, NTC20, PRP8, PRP9, PRP11, PRP19, PRP21, PRP22, PRP45, PRP46, SLU7, SMB1, SMD1, SMD2, SMD3, SMX2, SMX3, SNT309, SNU114, SPP2, SYF1, SYF2, RSE1 and YJU2. Interacts with CUS2.

The protein localises to the nucleus. In terms of biological role, mRNA splicing factors, PRP9, PRP11, and PRP21, are necessary for addition of the U2 snRNP to the pre-mRNA in an early step of spliceosome assembly. This Saccharomyces cerevisiae (strain ATCC 204508 / S288c) (Baker's yeast) protein is Pre-mRNA-splicing factor PRP11 (PRP11).